Consider the following 256-residue polypeptide: Peptidyl-prolyl cis-trans isomerase FKBP19, chloroplastic (256 aa).

The N-terminal 29 residues, 1–29 (MASISSFGCFPQSTALAGTSSTTRCRTTV), are a transit peptide targeting the chloroplast. The transit peptide at 30–88 (AARLADQSDDFAPLRSSGGNCGCVNNSGEFDRRKLLVSSVGLLIGALSYDSKDGDFASA) directs the protein to the thylakoid. The region spanning 135–254 (GDKVVVDWDG…LFDVELLKIV (120 aa)) is the PPIase FKBP-type domain. Ser164 carries the post-translational modification Phosphoserine.

Belongs to the FKBP-type PPIase family.

It localises to the plastid. It is found in the chloroplast thylakoid lumen. It carries out the reaction [protein]-peptidylproline (omega=180) = [protein]-peptidylproline (omega=0). In terms of biological role, PPIases accelerate the folding of proteins. It catalyzes the cis-trans isomerization of proline imidic peptide bonds in oligopeptides. The protein is Peptidyl-prolyl cis-trans isomerase FKBP19, chloroplastic (FKBP19) of Arabidopsis thaliana (Mouse-ear cress).